The following is a 547-amino-acid chain: Smu-2 suppressor of mec-8 and unc-52 protein (547 aa).

Disordered stretches follow at residues 18-125 (TSAR…AQDQ), 164-202 (IDKS…AQEL), 288-459 (AEPK…AGPK), 496-515 (NGEG…AKRL), and 524-547 (KIMD…KPKY). Residues 34-44 (ADPKTGDDKPA) show a composition bias toward basic and acidic residues. A compositionally biased stretch (basic residues) spans 45–58 (SFKHKHLKPAKFKK). Positions 66–94 (KAKKEKTEADEDEAALKNILKNYRDRAAE) form a coiled coil. A compositionally biased stretch (basic and acidic residues) spans 87-106 (NYRDRAAERRKQGDEKEDPS). The segment at 163–223 (EIDKSDDDDD…SLHRVLFKNE (61 aa)) is required and sufficient for interaction with smu-1. A compositionally biased stretch (acidic residues) spans 166–178 (KSDDDDDDDIDTA). 2 stretches are compositionally biased toward low complexity: residues 185 to 196 (SSSSSSKPSEAS) and 307 to 317 (APGAAAAAPGA). Positions 330–423 (VPSRKSRDSR…EREKKRKELE (94 aa)) are enriched in basic and acidic residues. Repeat copies occupy residues 336–337 (RD), 339–340 (RD), 348–349 (RD), 350–351 (RS), 352–353 (RD), 354–355 (RS), 356–357 (RD), 358–359 (RD), 360–361 (RD), 362–363 (RD), 364–365 (RD), and 367–368 (RD). The interval 336 to 368 (RDSRDAGRRGSRRDRSRDRSRDRDRDRDRDNRD) is 12 X 2 AA repeats of R-[DS]. The stretch at 371 to 427 (FEKSANSRREEEQNRREQQRERERAEQERRREREKEREQEKAKEREKKRKELEESSG) forms a coiled coil.

Belongs to the RED family. Probable component of the spliceosome. Heterotetramer with smu-1. The smu-1 homodimer interacts (via the N-terminal region including the LisH and CTLH domains) with smu-2, giving rise to a heterotetramer. As to expression, ubiquitous.

The protein localises to the nucleus. Functionally, auxiliary spliceosomal protein that regulates selection of alternative splice sites in a small set of target pre-mRNA species. Selectively regulates alternative splicing of unc-52 exon 17. Thus, smu-2 mutants selectively suppress the effects of unc-52 nonsense mutations in exon 17 by promoting the accumulation of unc-52 isoforms that lack exon 17. In contrast, smu-2 mutants do not suppress the effects of an unc-52 mutation that affects the 5' splice site of exon 16. Required for normal accumulation of smu-1. This Caenorhabditis elegans protein is Smu-2 suppressor of mec-8 and unc-52 protein.